A 365-amino-acid polypeptide reads, in one-letter code: Chorismate synthase (365 aa).

Residue Arg46 coordinates NADP(+). Residues 123-125 (RSS), 241-242 (NG), Gly281, 296-300 (KPTPS), and Arg322 contribute to the FMN site.

Belongs to the chorismate synthase family. Homotetramer. FMNH2 serves as cofactor.

The catalysed reaction is 5-O-(1-carboxyvinyl)-3-phosphoshikimate = chorismate + phosphate. It participates in metabolic intermediate biosynthesis; chorismate biosynthesis; chorismate from D-erythrose 4-phosphate and phosphoenolpyruvate: step 7/7. Its function is as follows. Catalyzes the anti-1,4-elimination of the C-3 phosphate and the C-6 proR hydrogen from 5-enolpyruvylshikimate-3-phosphate (EPSP) to yield chorismate, which is the branch point compound that serves as the starting substrate for the three terminal pathways of aromatic amino acid biosynthesis. This reaction introduces a second double bond into the aromatic ring system. In Helicobacter pylori (strain ATCC 700392 / 26695) (Campylobacter pylori), this protein is Chorismate synthase.